Reading from the N-terminus, the 311-residue chain is tRNA dimethylallyltransferase (311 aa).

9–16 (GPTAVGKT) lines the ATP pocket. Position 11–16 (11–16 (TAVGKT)) interacts with substrate. An interaction with substrate tRNA region spans residues 34 to 37 (DSMQ).

This sequence belongs to the IPP transferase family. In terms of assembly, monomer. Requires Mg(2+) as cofactor.

It carries out the reaction adenosine(37) in tRNA + dimethylallyl diphosphate = N(6)-dimethylallyladenosine(37) in tRNA + diphosphate. In terms of biological role, catalyzes the transfer of a dimethylallyl group onto the adenine at position 37 in tRNAs that read codons beginning with uridine, leading to the formation of N6-(dimethylallyl)adenosine (i(6)A). In Clostridium botulinum (strain Hall / ATCC 3502 / NCTC 13319 / Type A), this protein is tRNA dimethylallyltransferase.